The sequence spans 276 residues: ATP synthase subunit a (276 aa).

6 helical membrane passes run 47-67, 107-127, 152-172, 188-208, 226-246, and 247-267; these read WHID…WLFY, IAPL…MDLI, DLNV…FYSI, PFNH…TLVA, LIFI…SVPW, and AIFH…LTIV.

This sequence belongs to the ATPase A chain family. In terms of assembly, F-type ATPases have 2 components, CF(1) - the catalytic core - and CF(0) - the membrane proton channel. CF(1) has five subunits: alpha(3), beta(3), gamma(1), delta(1), epsilon(1). CF(0) has three main subunits: a(1), b(2) and c(9-12). The alpha and beta chains form an alternating ring which encloses part of the gamma chain. CF(1) is attached to CF(0) by a central stalk formed by the gamma and epsilon chains, while a peripheral stalk is formed by the delta and b chains.

It localises to the cell inner membrane. In terms of biological role, key component of the proton channel; it plays a direct role in the translocation of protons across the membrane. This chain is ATP synthase subunit a, found in Shewanella pealeana (strain ATCC 700345 / ANG-SQ1).